The sequence spans 150 residues: Urease accessory protein UreE (150 aa).

Belongs to the UreE family.

It localises to the cytoplasm. Involved in urease metallocenter assembly. Binds nickel. Probably functions as a nickel donor during metallocenter assembly. The polypeptide is Urease accessory protein UreE (Staphylococcus aureus (strain Mu3 / ATCC 700698)).